A 468-amino-acid polypeptide reads, in one-letter code: Malate-2H(+)/Na(+)-lactate antiporter (468 aa).

12 helical membrane-spanning segments follow: residues 9-29, 30-50, 73-93, 96-116, 136-156, 192-212, 233-253, 258-278, 309-329, 357-377, 405-425, and 428-448; these read LFEI…FTVF, LDLP…LLGI, AVLI…GGVV, LIYY…TLII, IAMI…AGAI, LYLS…VGFM, TFDI…LLAM, MPVI…FQGM, IVGM…GGLL, LIVA…LILT, LTSG…ILGV, and FSYL…IIYG.

The protein belongs to the NhaC Na(+)/H(+) (TC 2.A.35) antiporter family.

It is found in the cell membrane. Couples proton uptake and Na(+) efflux to the substrate-product malate/lactate antiport, in an electroneutral malate-2H(+)/Na(+)-lactate exchange. Plays a role in supporting growth to high density on malate at reduced protonmotive force. The polypeptide is Malate-2H(+)/Na(+)-lactate antiporter (mleN) (Bacillus subtilis (strain 168)).